We begin with the raw amino-acid sequence, 507 residues long: DNA ligase B (507 aa).

Positions 1-172 (MLLHDVAITS…AAAAGLSGAA (172 aa)) are not required for adenylyltransferase activity, required for nick joining. Residue glutamate 209 coordinates ATP. The active-site N6-AMP-lysine intermediate is lysine 211. ATP is bound by residues arginine 216, arginine 231, glutamate 260, phenylalanine 300, arginine 372, and lysine 378.

This sequence belongs to the ATP-dependent DNA ligase family. As to quaternary structure, monomer. The cofactor is Mg(2+).

The catalysed reaction is ATP + (deoxyribonucleotide)n-3'-hydroxyl + 5'-phospho-(deoxyribonucleotide)m = (deoxyribonucleotide)n+m + AMP + diphosphate.. In terms of biological role, DNA ligase that seals nicks in double-stranded DNA during DNA replication, DNA recombination and DNA repair. The protein is DNA ligase B (ligB) of Mycobacterium tuberculosis (strain ATCC 25618 / H37Rv).